We begin with the raw amino-acid sequence, 122 residues long: uncharacterized protein (122 aa).

It localises to the mitochondrion. This is an uncharacterized protein from Claviceps purpurea (Ergot fungus).